The following is a 301-amino-acid chain: Small ribosomal subunit protein uS2 (301 aa).

Residues 282–301 form a disordered region; that stretch reads VRKQPVSENENVEAAAAEQK. Residues 289-301 are compositionally biased toward low complexity; it reads ENENVEAAAAEQK.

Belongs to the universal ribosomal protein uS2 family.

This is Small ribosomal subunit protein uS2 from Koribacter versatilis (strain Ellin345).